We begin with the raw amino-acid sequence, 333 residues long: Cytochrome c oxidase assembly protein COX18, mitochondrial (333 aa).

Residues 168 to 188 traverse the membrane as a helical segment; it reads FKATVLVWIQLPMWIFMSFAL. Topologically, residues 189-223 are mitochondrial matrix; the sequence is RNLSTGAAHSEGFSVQEQLATGGILWFPDLTAPDS. Residues 224–244 form a helical membrane-spanning segment; sequence TWILPISVGVINLLIVEICAL. At 245–262 the chain is on the mitochondrial intermembrane side; it reads QKIGMSRFQTYITYFVRA. A helical membrane pass occupies residues 263 to 283; it reads MSVLMIPIAATVPSSIVLYWL. The Mitochondrial matrix segment spans residues 284 to 333; the sequence is CSSFVGLSQNLLLRSPGFRQLCRIPSTKSDSETPYKDIFAAFNTKFISRK.

It belongs to the OXA1/ALB3/YidC family. In terms of assembly, found in a complex with TMEM177, COA6, MT-CO2/COX2, COX20, SCO1 and SCO2. Interacts transiently with MT-CO2/COX2 during its maturation. Interacts with COX20 in a MT-CO2/COX2-dependent manner.

It is found in the mitochondrion inner membrane. Mitochondrial membrane insertase required for the translocation of the C-terminus of cytochrome c oxidase subunit II (MT-CO2/COX2) across the mitochondrial inner membrane. Plays a role in MT-CO2/COX2 maturation following the COX20-mediated stabilization of newly synthesized MT-CO2/COX2 protein and before the action of the metallochaperones SCO1/2. Essential for the assembly and stability of the mitochondrial respiratory chain complex IV (also known as cytochrome c oxidase). The protein is Cytochrome c oxidase assembly protein COX18, mitochondrial (COX18) of Homo sapiens (Human).